The primary structure comprises 165 residues: uncharacterized protein (165 aa).

The tract at residues 1 to 36 (MTRLCLPRPEAREDPIPVPPRGLGAGEGSGSPVRPP) is disordered. The helical transmembrane segment at 135–155 (LLLLMGLGPLLRACGMPLTLL) threads the bilayer.

It is found in the membrane. This is an uncharacterized protein from Homo sapiens (Human).